The primary structure comprises 101 residues: Urease subunit beta (101 aa).

This sequence belongs to the urease beta subunit family. In terms of assembly, heterotrimer of UreA (gamma), UreB (beta) and UreC (alpha) subunits. Three heterotrimers associate to form the active enzyme.

It localises to the cytoplasm. The catalysed reaction is urea + 2 H2O + H(+) = hydrogencarbonate + 2 NH4(+). It participates in nitrogen metabolism; urea degradation; CO(2) and NH(3) from urea (urease route): step 1/1. In Burkholderia cenocepacia (strain ATCC BAA-245 / DSM 16553 / LMG 16656 / NCTC 13227 / J2315 / CF5610) (Burkholderia cepacia (strain J2315)), this protein is Urease subunit beta.